The sequence spans 378 residues: Cytochrome b (378 aa).

Helical transmembrane passes span 34-54 (FGSL…FLAM), 78-99 (WLLR…YLHV), 114-134 (WLIG…GYVL), and 179-199 (FFTF…IHLL). Heme b contacts are provided by H84 and H98. Residues H183 and H197 each coordinate heme b. Position 202 (H202) interacts with a ubiquinone. A run of 4 helical transmembrane segments spans residues 227 to 247 (FKDI…VLIS), 289 to 309 (LGGV…PFYN), 321 to 341 (INQV…WIGA), and 348 to 368 (YVLI…VNPL).

It belongs to the cytochrome b family. The main subunits of complex b-c1 are: cytochrome b, cytochrome c1 and the Rieske protein. Heme b is required as a cofactor.

The protein resides in the mitochondrion inner membrane. In terms of biological role, component of the ubiquinol-cytochrome c reductase complex (complex III or cytochrome b-c1 complex) that is part of the mitochondrial respiratory chain. The b-c1 complex mediates electron transfer from ubiquinol to cytochrome c. Contributes to the generation of a proton gradient across the mitochondrial membrane that is then used for ATP synthesis. The polypeptide is Cytochrome b (mt:Cyt-b) (Drosophila mauritiana (Fruit fly)).